The following is a 310-amino-acid chain: Olfactory receptor 5P56 (310 aa).

Residues 1 to 25 are Extracellular-facing; the sequence is MEAQNHTTVKEFILLGLTENSTLRV. Asparagine 5 and asparagine 20 each carry an N-linked (GlcNAc...) asparagine glycan. The helical transmembrane segment at 26-46 threads the bilayer; sequence ILFMIFLGIYTVTLVGNFSII. Over 47 to 54 the chain is Cytoplasmic; the sequence is SLIRSCPQ. Residues 55-75 traverse the membrane as a helical segment; it reads LHTPMYLFLSHLALVDIGFST. Topologically, residues 76 to 99 are extracellular; the sequence is SITPIMLTGFLGHTVTLSVAACVA. Cysteines 97 and 189 form a disulfide. The helical transmembrane segment at 100–120 threads the bilayer; it reads QFCIAVTFGTVECFLLAVMAY. Over 121–133 the chain is Cytoplasmic; sequence DRYVAICSPLLYS. A helical membrane pass occupies residues 134–154; sequence THMSPRICFLLVGASYVGGCV. Topologically, residues 155-196 are extracellular; the sequence is NSGTFTSCLLILSFCGPNQIDHFFCDFPAVLKLSCSDVSIIG. A helical membrane pass occupies residues 197 to 217; it reads IIPSISAGSIIVITVFVIAVS. Topologically, residues 218–237 are cytoplasmic; the sequence is YTYILITILNMRSTEGRHKA. Residues 238–258 traverse the membrane as a helical segment; that stretch reads FSTCTSHLTAVTLYYGTITFI. Residues 259-271 are Extracellular-facing; it reads YVMPKSNYSTAQN. Residue asparagine 265 is glycosylated (N-linked (GlcNAc...) asparagine). Residues 272-292 form a helical membrane-spanning segment; sequence KILSVFYTVVIPMLNPLIYSL. At 293 to 310 the chain is on the cytoplasmic side; sequence RNRDVKEALRKAIIRIFP.

It belongs to the G-protein coupled receptor 1 family.

The protein resides in the cell membrane. Its function is as follows. Potential odorant receptor. This Mus musculus (Mouse) protein is Olfactory receptor 5P56.